We begin with the raw amino-acid sequence, 162 residues long: Circumsporozoite protein-related antigen (162 aa).

The N-terminal stretch at 1 to 16 (MKILSVFFLALFFIIF) is a signal peptide. 2 disordered regions span residues 24–44 (KTNK…KGSG) and 109–162 (PFKI…GPEH). Over residues 114-130 (SSDPADNANPDADSESN) the composition is skewed to low complexity. The span at 137-162 (PQVTAQDVTPEQPQGDDNNLVSGPEH) shows a compositional bias: polar residues.

The chain is Circumsporozoite protein-related antigen from Plasmodium falciparum.